Here is an 81-residue protein sequence, read N- to C-terminus: Large ribosomal subunit protein bL31B (81 aa).

It belongs to the bacterial ribosomal protein bL31 family. Type B subfamily. Part of the 50S ribosomal subunit.

The chain is Large ribosomal subunit protein bL31B from Bdellovibrio bacteriovorus (strain ATCC 15356 / DSM 50701 / NCIMB 9529 / HD100).